A 386-amino-acid polypeptide reads, in one-letter code: bHLH transcription factor RHL1 (386 aa).

Positions 119–186 (FTGSLNGTQP…RRGQATDPHS (68 aa)) are disordered. The segment covering 127–137 (QPQQHFQHPPQ) has biased composition (low complexity). Residues 138 to 151 (GNSNQIQGQNFGAT) show a composition bias toward polar residues. A basic motif; degenerate region spans residues 180–193 (QATDPHSIAERLRR). Residues 180–229 (QATDPHSIAERLRRERIAERMKALQELVPNANKTDKASMLDEIIDYVKFL) enclose the bHLH domain. A helix-loop-helix motif region spans residues 194 to 229 (ERIAERMKALQELVPNANKTDKASMLDEIIDYVKFL).

In terms of tissue distribution, expressed in root epidermal cells.

The protein localises to the nucleus. In terms of biological role, transcription factor that regulates the development of root hairs. This is bHLH transcription factor RHL1 from Lotus japonicus (Lotus corniculatus var. japonicus).